We begin with the raw amino-acid sequence, 363 residues long: Protein-glutamate methylesterase/protein-glutamine glutaminase 2 (363 aa).

The region spanning 6–123 is the Response regulatory domain; that stretch reads RVLIVDDSAS…AQFLLESKIH (118 aa). Asp-57 is modified (4-aspartylphosphate). The CheB-type methylesterase domain occupies 172 to 363; that stretch reads ARTTESVICI…AMEILRAGNR (192 aa). Residues Ser-184, His-210, and Asp-306 contribute to the active site.

The protein belongs to the CheB family. Phosphorylated by CheA. Phosphorylation of the N-terminal regulatory domain activates the methylesterase activity.

The protein localises to the cytoplasm. It catalyses the reaction [protein]-L-glutamate 5-O-methyl ester + H2O = L-glutamyl-[protein] + methanol + H(+). The enzyme catalyses L-glutaminyl-[protein] + H2O = L-glutamyl-[protein] + NH4(+). Involved in chemotaxis. Part of a chemotaxis signal transduction system that modulates chemotaxis in response to various stimuli. Catalyzes the demethylation of specific methylglutamate residues introduced into the chemoreceptors (methyl-accepting chemotaxis proteins or MCP) by CheR. Also mediates the irreversible deamidation of specific glutamine residues to glutamic acid. In Rhodospirillum rubrum (strain ATCC 11170 / ATH 1.1.1 / DSM 467 / LMG 4362 / NCIMB 8255 / S1), this protein is Protein-glutamate methylesterase/protein-glutamine glutaminase 2.